Consider the following 394-residue polypeptide: Elongation factor Tu (394 aa).

The region spanning 10–204 is the tr-type G domain; the sequence is KPHVNVGTIG…ALDSYIPTPE (195 aa). Positions 19-26 are G1; the sequence is GHVDHGKT. GTP is bound at residue 19 to 26; it reads GHVDHGKT. T26 is a Mg(2+) binding site. The interval 60–64 is G2; sequence GITIN. Residues 81 to 84 are G3; the sequence is DCPG. GTP-binding positions include 81-85 and 136-139; these read DCPGH and NKCD. Residues 136–139 form a G4 region; the sequence is NKCD. A G5 region spans residues 174–176; that stretch reads SAL.

This sequence belongs to the TRAFAC class translation factor GTPase superfamily. Classic translation factor GTPase family. EF-Tu/EF-1A subfamily. In terms of assembly, monomer.

It localises to the cytoplasm. It carries out the reaction GTP + H2O = GDP + phosphate + H(+). Functionally, GTP hydrolase that promotes the GTP-dependent binding of aminoacyl-tRNA to the A-site of ribosomes during protein biosynthesis. This is Elongation factor Tu from Neisseria gonorrhoeae (strain ATCC 700825 / FA 1090).